The primary structure comprises 343 residues: Phosphatidylglycerol--prolipoprotein diacylglyceryl transferase (343 aa).

4 helical membrane passes run 22–42 (IPIR…LIIG), 54–74 (GVIY…GRLY), 97–117 (VWEG…GAWI), and 123–143 (GIPL…AQAI). Arginine 145 is a binding site for a 1,2-diacyl-sn-glycero-3-phospho-(1'-sn-glycerol). The next 2 membrane-spanning stretches (helical) occupy residues 193–213 (VVHP…VLLI) and 257–277 (VNSF…LLAP). The segment at 283 to 343 (PATLGGTPSS…SADNSGIVEK (61 aa)) is disordered. Residues 295-325 (GGDDTAETEATADTEDTEDTEDGVTDAPEAD) are compositionally biased toward acidic residues.

It belongs to the Lgt family.

The protein localises to the cell membrane. It catalyses the reaction L-cysteinyl-[prolipoprotein] + a 1,2-diacyl-sn-glycero-3-phospho-(1'-sn-glycerol) = an S-1,2-diacyl-sn-glyceryl-L-cysteinyl-[prolipoprotein] + sn-glycerol 1-phosphate + H(+). It participates in protein modification; lipoprotein biosynthesis (diacylglyceryl transfer). Functionally, catalyzes the transfer of the diacylglyceryl group from phosphatidylglycerol to the sulfhydryl group of the N-terminal cysteine of a prolipoprotein, the first step in the formation of mature lipoproteins. The sequence is that of Phosphatidylglycerol--prolipoprotein diacylglyceryl transferase from Mycobacteroides abscessus (strain ATCC 19977 / DSM 44196 / CCUG 20993 / CIP 104536 / JCM 13569 / NCTC 13031 / TMC 1543 / L948) (Mycobacterium abscessus).